A 30-amino-acid polypeptide reads, in one-letter code: Photosystem II reaction center protein Psb30 (30 aa).

Residues 1-6 lie on the Lumenal side of the membrane; it reads EVIAQL. The chain crosses the membrane as a helical span at residues 7-21; it reads TMIAMIGIAGPMIIF. At 22–30 the chain is on the cytoplasmic side; the sequence is LLAVRRGNL.

The protein belongs to the Psb30/Ycf12 family. As to quaternary structure, PSII is composed of 1 copy each of membrane proteins PsbA, PsbB, PsbC, PsbD, PsbE, PsbF, PsbH, PsbI, PsbJ, PsbK, PsbL, PsbM, PsbT, PsbX, PsbY, PsbZ, Psb30/Ycf12, peripheral proteins PsbO, CyanoQ (PsbQ), PsbU, PsbV and a large number of cofactors. It forms dimeric complexes. PSII binds multiple chlorophylls, carotenoids and specific lipids. serves as cofactor.

The protein localises to the cellular thylakoid membrane. Functionally, a core subunit of photosystem II (PSII), probably helps stabilize the reaction center. PSII is a light-driven water plastoquinone oxidoreductase, using light energy to abstract electrons from H(2)O, generating a proton gradient subsequently used for ATP formation. In Thermostichus vulcanus (Synechococcus vulcanus), this protein is Photosystem II reaction center protein Psb30.